A 278-amino-acid polypeptide reads, in one-letter code: Large ribosomal subunit protein uL2c (278 aa).

The interval 224-267 (VVMNPVDHPHGGGEGRAPIGRKKPLTPWGHTALGGRSRKNHKYS) is disordered.

The protein belongs to the universal ribosomal protein uL2 family. As to quaternary structure, part of the 50S ribosomal subunit.

It is found in the plastid. The protein resides in the chloroplast. This Huperzia lucidula (Shining clubmoss) protein is Large ribosomal subunit protein uL2c (rpl2).